Consider the following 176-residue polypeptide: MAESQTGGGGGGSHESGGDQSPRSLNVREQDRFLPIANISRIMKRGLPLNGKIAKDAKETMQECVSEFISFVTSEASDKCQREKRKTINGDDLLWAMATLGFEDYIDPLKVYLMRYREMEGDTKGSGKGGESSAKRDGQPSQVSQFSQVPQQGSFSQGPYGNSQGSNMMVQMPGTE.

The segment covering Met1 to Glu15 has biased composition (gly residues). Residues Met1–Glu29 are disordered. Ala2 is subject to N-acetylalanine. The DNA-binding element occupies Leu34 to Ser40. Residues Met61–Val72 form a subunit association domain (SAD) region. A disordered region spans residues Gly121–Glu176. A compositionally biased stretch (low complexity) spans Gln139 to Pro159. The span at Tyr160 to Met169 shows a compositional bias: polar residues.

Belongs to the NFYB/HAP3 subunit family. As to quaternary structure, heterotrimeric transcription factor composed of three components, NF-YA, NF-YB and NF-YC. NF-YB and NF-YC must interact and dimerize for NF-YA association and DNA binding. In terms of tissue distribution, expressed in the whole plant, except roots.

It is found in the nucleus. Functionally, component of the NF-Y/HAP transcription factor complex. The NF-Y complex stimulates the transcription of various genes by recognizing and binding to a CCAAT motif in promoters. The chain is Nuclear transcription factor Y subunit B-10 (NFYB10) from Arabidopsis thaliana (Mouse-ear cress).